Consider the following 443-residue polypeptide: Ribosomal protein uS12 methylthiotransferase RimO (443 aa).

In terms of domain architecture, MTTase N-terminal spans Met-1 to Pro-114. 6 residues coordinate [4Fe-4S] cluster: Cys-8, Cys-44, Cys-73, Cys-145, Cys-149, and Cys-152. In terms of domain architecture, Radical SAM core spans Leu-131–Arg-372. In terms of domain architecture, TRAM spans Gln-375–Val-443.

It belongs to the methylthiotransferase family. RimO subfamily. [4Fe-4S] cluster serves as cofactor.

It localises to the cytoplasm. The catalysed reaction is L-aspartate(89)-[ribosomal protein uS12]-hydrogen + (sulfur carrier)-SH + AH2 + 2 S-adenosyl-L-methionine = 3-methylsulfanyl-L-aspartate(89)-[ribosomal protein uS12]-hydrogen + (sulfur carrier)-H + 5'-deoxyadenosine + L-methionine + A + S-adenosyl-L-homocysteine + 2 H(+). Its function is as follows. Catalyzes the methylthiolation of an aspartic acid residue of ribosomal protein uS12. The chain is Ribosomal protein uS12 methylthiotransferase RimO from Cupriavidus necator (strain ATCC 17699 / DSM 428 / KCTC 22496 / NCIMB 10442 / H16 / Stanier 337) (Ralstonia eutropha).